The sequence spans 430 residues: Glutamate-1-semialdehyde 2,1-aminomutase 2 (430 aa).

Residue Lys-268 is modified to N6-(pyridoxal phosphate)lysine.

Belongs to the class-III pyridoxal-phosphate-dependent aminotransferase family. HemL subfamily. In terms of assembly, homodimer. Requires pyridoxal 5'-phosphate as cofactor.

It is found in the cytoplasm. The enzyme catalyses (S)-4-amino-5-oxopentanoate = 5-aminolevulinate. Its pathway is porphyrin-containing compound metabolism; protoporphyrin-IX biosynthesis; 5-aminolevulinate from L-glutamyl-tRNA(Glu): step 2/2. This chain is Glutamate-1-semialdehyde 2,1-aminomutase 2, found in Shouchella clausii (strain KSM-K16) (Alkalihalobacillus clausii).